A 100-amino-acid chain; its full sequence is Sec-independent protein translocase protein TatA (100 aa).

Residues 1 to 21 (MGALRPWHIAVLVVVLILLFG) form a helical membrane-spanning segment. Residues 46 to 58 (LHDDDRDLAEKAD) are compositionally biased toward basic and acidic residues. The interval 46–100 (LHDDDRDLAEKADAQAGYQPMPPQVQQGQHPQQSPYPAPPQQQPVVDPVQRTRDS) is disordered. Positions 69-78 (QVQQGQHPQQ) are enriched in low complexity.

Belongs to the TatA/E family. In terms of assembly, the Tat system comprises two distinct complexes: a TatABC complex, containing multiple copies of TatA, TatB and TatC subunits, and a separate TatA complex, containing only TatA subunits. Substrates initially bind to the TatABC complex, which probably triggers association of the separate TatA complex to form the active translocon.

The protein resides in the cell membrane. Functionally, part of the twin-arginine translocation (Tat) system that transports large folded proteins containing a characteristic twin-arginine motif in their signal peptide across membranes. TatA could form the protein-conducting channel of the Tat system. In Salinispora tropica (strain ATCC BAA-916 / DSM 44818 / JCM 13857 / NBRC 105044 / CNB-440), this protein is Sec-independent protein translocase protein TatA.